Consider the following 504-residue polypeptide: Glucose-6-phosphate isomerase (504 aa).

Residue Glu333 is the Proton donor of the active site. Active-site residues include His364 and Lys473.

This sequence belongs to the GPI family.

It localises to the cytoplasm. The catalysed reaction is alpha-D-glucose 6-phosphate = beta-D-fructose 6-phosphate. It participates in carbohydrate biosynthesis; gluconeogenesis. Its pathway is carbohydrate degradation; glycolysis; D-glyceraldehyde 3-phosphate and glycerone phosphate from D-glucose: step 2/4. In terms of biological role, catalyzes the reversible isomerization of glucose-6-phosphate to fructose-6-phosphate. The polypeptide is Glucose-6-phosphate isomerase (Xanthomonas oryzae pv. oryzae (strain PXO99A)).